The primary structure comprises 159 residues: Large ribosomal subunit protein uL30 (159 aa).

It belongs to the universal ribosomal protein uL30 family. As to quaternary structure, part of the 50S ribosomal subunit.

This Aeropyrum pernix (strain ATCC 700893 / DSM 11879 / JCM 9820 / NBRC 100138 / K1) protein is Large ribosomal subunit protein uL30.